A 130-amino-acid polypeptide reads, in one-letter code: MSSFEYPQDLRYLDTHEYVRLDGEIATIGITEFAVDQLGDVVFLELPDIGDLLTKGDTFGTIESVKAVEDLNAPITGTVVERNEILIESPDAVADDPYGEGWFLKVRVNDPDEVNDALTADEYRAEVEGE.

One can recognise a Lipoyl-binding domain in the interval 25–107; it reads IATIGITEFA…YGEGWFLKVR (83 aa). Residue lysine 66 is modified to N6-lipoyllysine.

The protein belongs to the GcvH family. The glycine cleavage system is composed of four proteins: P, T, L and H. Requires (R)-lipoate as cofactor.

The glycine cleavage system catalyzes the degradation of glycine. The H protein shuttles the methylamine group of glycine from the P protein to the T protein. The protein is Glycine cleavage system H protein of Trichormus variabilis (strain ATCC 29413 / PCC 7937) (Anabaena variabilis).